Reading from the N-terminus, the 504-residue chain is Sodium/proline symporter (504 aa).

The next 13 helical transmembrane spans lie at 8–28 (LITFTIYIFGMLLIGVLAYYY), 50–70 (SAGASDMSGWLLMGLPGAVYL), 73–93 (LVEGWIAIGLTIGAYFNWLLV), 127–147 (LVSATIILVFLTIYCASGVVA), 163–183 (ALWYGAAATIAYTFIGGFLAV), 189–209 (IQATLMIFALILTPVFVLLSF), 240–260 (LGLLSLAAWGLGYFGQPHILA), 281–301 (WMVLCLAGAIGIGLFAIPYFF), 324–344 (LLFNPWIAGILLSAILAAVMS), 374–394 (ELVWLGRIMVLVIAALAIWIA), 405–425 (VEFAWAGFGSAFGPVVLFSLF), 434–454 (AMAGMLVGAVTVFAWKEVVPA), and 461–481 (VYEMIPGFAFASLAIIVISLL).

Belongs to the sodium:solute symporter (SSF) (TC 2.A.21) family.

The protein localises to the cell inner membrane. The catalysed reaction is L-proline(in) + Na(+)(in) = L-proline(out) + Na(+)(out). Catalyzes the sodium-dependent uptake of extracellular L-proline. The chain is Sodium/proline symporter (putP) from Haemophilus influenzae (strain ATCC 51907 / DSM 11121 / KW20 / Rd).